A 399-amino-acid polypeptide reads, in one-letter code: Inositol polyphosphate 1-phosphatase (399 aa).

Residue aspartate 54 participates in Li(+) binding. Glutamate 79 contributes to the Mg(2+) binding site. Glutamate 80 contributes to the Li(+) binding site. Residues aspartate 153 and isoleucine 155 each contribute to the Mg(2+) site. 1D-myo-inositol 1,4-bisphosphate-binding residues include aspartate 156, serine 157, threonine 158, serine 267, lysine 269, glycine 289, alanine 290, lysine 293, and threonine 311. Residue aspartate 316 coordinates Mg(2+). Serine 317 bears the Phosphoserine mark.

It belongs to the inositol monophosphatase superfamily. As to quaternary structure, monomer. It depends on Mg(2+) as a cofactor. Ubiquitously expressed, with highest levels in pancreas and kidney.

It carries out the reaction 1D-myo-inositol 1,4-bisphosphate + H2O = 1D-myo-inositol 4-phosphate + phosphate. The enzyme catalyses 1D-myo-inositol 1,3,4-trisphosphate + H2O = 1D-myo-inositol 3,4-bisphosphate + phosphate. Its pathway is signal transduction; phosphatidylinositol signaling pathway. With respect to regulation, inhibited by Li(+). Its function is as follows. Mg(2+)-dependent phosphatase that catalyzes the hydrolysis of the 1-position phosphate from inositol 1,4-bisphosphate and inositol 1,3,4-trisphosphate and participates in inositol phosphate metabolism. The polypeptide is Inositol polyphosphate 1-phosphatase (Homo sapiens (Human)).